The following is a 379-amino-acid chain: Tryptophan 2,3-dioxygenase (379 aa).

Substrate-binding positions include 57 to 61 (FIITH) and Arg128. His312 serves as a coordination point for heme. Thr327 serves as a coordination point for substrate.

This sequence belongs to the tryptophan 2,3-dioxygenase family. In terms of assembly, homotetramer. Dimer of dimers. The cofactor is heme.

The catalysed reaction is L-tryptophan + O2 = N-formyl-L-kynurenine. The protein operates within amino-acid degradation; L-tryptophan degradation via kynurenine pathway; L-kynurenine from L-tryptophan: step 1/2. Its pathway is pigment biosynthesis; ommochrome biosynthesis. Its function is as follows. Heme-dependent dioxygenase that catalyzes the oxidative cleavage of the L-tryptophan (L-Trp) pyrrole ring and converts L-tryptophan to N-formyl-L-kynurenine. Catalyzes the oxidative cleavage of the indole moiety. This chain is Tryptophan 2,3-dioxygenase, found in Drosophila yakuba (Fruit fly).